The primary structure comprises 483 residues: Pre-glycoprotein polyprotein GP complex (483 aa).

Residue G2 is the site of N-myristoyl glycine; by host attachment. The Extracellular segment spans residues G2–E17. Residues A18–M32 traverse the membrane as a helical segment. Position 33 (K33) is a topological domain, cytoplasmic. A helical membrane pass occupies residues G34–A53. Extracellular loops occupy residues G54–S58 and I59–D422. C57 is a Zn(2+) binding site. N73, N88, N130, and N179 each carry an N-linked (GlcNAc...) asparagine; by host glycan. 5 disulfides stabilise this stretch: C85/C223, C186/C204, C269/C282, C291/C300, and C354/C375. N216 carries N-linked (GlcNAc...) asparagine; by host glycosylation. N-linked (GlcNAc...) asparagine; by host glycans are attached at residues N355, N363, N380, and N385. The chain crosses the membrane as a helical span at residues L423 to P443. Over T444–P483 the chain is Cytoplasmic. Residues H445, H447, C453, H457, C465, and C467 each contribute to the Zn(2+) site.

The protein belongs to the arenaviridae GPC protein family. In terms of assembly, homotetramer; disulfide-linked. As to quaternary structure, homotetramer. GP2 homotetramers bind through ionic interactions with GP1 homotetramers to form the GP complex together with the stable signal peptide. The GP-C polyprotein interacts with the host protease MBTPS1/SKI-1 resulting in the polyprotein processing. Post-translationally, specific enzymatic cleavages in vivo yield mature proteins. GP-C polyprotein is cleaved in the endoplasmic reticulum by the host protease MBTPS1. Only cleaved glycoprotein is incorporated into virions. The SSP remains stably associated with the GP complex following cleavage by signal peptidase and plays crucial roles in the trafficking of GP through the secretory pathway. In terms of processing, myristoylation is necessary for GP2-mediated fusion activity.

It is found in the virion membrane. The protein resides in the host endoplasmic reticulum membrane. It localises to the host Golgi apparatus membrane. Its subcellular location is the host cell membrane. Class I viral fusion protein that directs fusion of viral and host endosomal membranes, leading to delivery of the nucleocapsid into the cytoplasm. Membrane fusion is mediated by irreversible conformational changes induced upon acidification in the endosome. Functionally, stable signal peptide (SSP): cleaved and functions as a signal peptide. In addition, it is also retained as the third component of the GP complex. The SSP is required for efficient glycoprotein expression, post-translational maturation cleavage of GP1 and GP2, glycoprotein transport to the cell surface plasma membrane, formation of infectious virus particles, and acid pH-dependent glycoprotein-mediated cell fusion. In terms of biological role, interacts with the host receptor. This chain is Pre-glycoprotein polyprotein GP complex, found in Peromyscus californicus (California mouse).